A 515-amino-acid polypeptide reads, in one-letter code: Protein disulfide-isomerase (515 aa).

The first 22 residues, 1 to 22, serve as a signal peptide directing secretion; it reads MAVVRVRAIVALLCLVAALGLA. 2 Thioredoxin domains span residues 23–139 and 351–480; these read EPLE…KRTG and FLEG…SGGQ. Residues cysteine 58, cysteine 61, cysteine 402, and cysteine 405 each act as nucleophile in the active site. Intrachain disulfides connect cysteine 58/cysteine 61 and cysteine 402/cysteine 405. The disordered stretch occupies residues 477 to 515; it reads SGGQDGAAADDDLEDLETDEETDLEEGDDDEQKIQKDEL. Over residues 484-507 the composition is skewed to acidic residues; sequence AADDDLEDLETDEETDLEEGDDDE. The Prevents secretion from ER signature appears at 512 to 515; the sequence is KDEL.

Belongs to the protein disulfide isomerase family. Heterodimer; heterodimerizes with the protein microsomal triglyceride transfer MTTP. Homodimer. Monomers and homotetramers may also occur. Also constitutes the structural subunit of prolyl 4-hydroxylase. Stabilizes this enzyme and retains it in the ER without contributing to the catalytic activity. Binds UBQLN1.

It localises to the endoplasmic reticulum. The protein resides in the endoplasmic reticulum lumen. The protein localises to the cell membrane. It carries out the reaction Catalyzes the rearrangement of -S-S- bonds in proteins.. Functionally, this multifunctional protein catalyzes the formation, breakage and rearrangement of disulfide bonds. At the cell surface, seems to act as a reductase that cleaves disulfide bonds of proteins attached to the cell. May therefore cause structural modifications of exofacial proteins. Inside the cell, seems to form/rearrange disulfide bonds of nascent proteins. At high concentrations, functions as a chaperone that inhibits aggregation of misfolded proteins. At low concentrations, facilitates aggregation (anti-chaperone activity). Also acts a structural subunit of various enzymes such as prolyl 4-hydroxylase. The protein is Protein disulfide-isomerase (P4HB) of Gallus gallus (Chicken).